Here is a 281-residue protein sequence, read N- to C-terminus: MKLAVIGSGTMGSGIVQTFASCGHDVCLKSRTQGAIDKCLALLDKNLTKLVTKGKWMKATKAEILSHVSSTTNYEDLKDMDLIIEASVEDMNIKKDVFKLLDELCKEDTILATNTSSLSITEIASSTKRPDKVIGMHFFNPVPMMKLVEVISGQLTSKVTFDTVFELSKSINKVPVDVSESPGFVVNRILIPMINEAVGIYADGVASKEEIDEAMKLGANHPMGPLALGDLIGLDVVLAIMNVLYTEFGDTKYTAHPLLAKMVRANQLGRKTKIGFYDYNK.

Belongs to the 3-hydroxyacyl-CoA dehydrogenase family.

The enzyme catalyses (3S)-3-hydroxybutanoyl-CoA + NADP(+) = acetoacetyl-CoA + NADPH + H(+). It participates in lipid metabolism; butanoate metabolism. This is 3-hydroxybutyryl-CoA dehydrogenase (hbd) from Clostridioides difficile (Peptoclostridium difficile).